Reading from the N-terminus, the 59-residue chain is Protein B3 (59 aa).

The chain is Protein B3 (B3) from Homo sapiens (Human).